The following is a 629-amino-acid chain: 1-deoxy-D-xylulose-5-phosphate synthase (629 aa).

Thiamine diphosphate is bound by residues His-73 and 114 to 116 (GHA). Asp-145 provides a ligand contact to Mg(2+). Residues 146-147 (GA), Asn-174, Tyr-284, and Glu-360 contribute to the thiamine diphosphate site. Residue Asn-174 participates in Mg(2+) binding.

It belongs to the transketolase family. DXPS subfamily. In terms of assembly, homodimer. The cofactor is Mg(2+). Requires thiamine diphosphate as cofactor.

It catalyses the reaction D-glyceraldehyde 3-phosphate + pyruvate + H(+) = 1-deoxy-D-xylulose 5-phosphate + CO2. Its pathway is metabolic intermediate biosynthesis; 1-deoxy-D-xylulose 5-phosphate biosynthesis; 1-deoxy-D-xylulose 5-phosphate from D-glyceraldehyde 3-phosphate and pyruvate: step 1/1. Functionally, catalyzes the acyloin condensation reaction between C atoms 2 and 3 of pyruvate and glyceraldehyde 3-phosphate to yield 1-deoxy-D-xylulose-5-phosphate (DXP). This Thermomicrobium roseum (strain ATCC 27502 / DSM 5159 / P-2) protein is 1-deoxy-D-xylulose-5-phosphate synthase.